A 332-amino-acid chain; its full sequence is Invasin IpaD (332 aa).

Over residues 1–25 (MNITTLTNSISTSSFSPNNTNGSST) the composition is skewed to low complexity. Positions 1 to 43 (MNITTLTNSISTSSFSPNNTNGSSTETVNSDIKTTTSSHPVSS) are disordered. Residues 26–43 (ETVNSDIKTTTSSHPVSS) are compositionally biased toward polar residues. Residues 44–77 (LTMLNDTLHNIRTTNQALKKELSQKTLTKTSLEE) adopt a coiled-coil conformation. An ipaB binding region spans residues 192 to 267 (VNSLKKALEE…KSLDNLGGNG (76 aa)).

It belongs to the invasin protein D family.

Its subcellular location is the secreted. Its function is as follows. Required for bacterial invasion of host cells. Controls IpaB and IpaC secretion, and the efficiency with which they are physically inserted into target cell membranes. These proteins are exported via T3SS to form a pore in the host membrane that allows the translocation of the other effectors into the host cytoplasm. Along with IpaB, is essential for both blocking secretion through the Mxi/Spa translocon in the absence of a secretion-inducing signal, and for controlling the level of secretion in the presence of this signal. This is Invasin IpaD (ipaD) from Shigella flexneri.